The sequence spans 235 residues: Large ribosomal subunit protein uL1 (235 aa).

It belongs to the universal ribosomal protein uL1 family. Part of the 50S ribosomal subunit.

Functionally, binds directly to 23S rRNA. The L1 stalk is quite mobile in the ribosome, and is involved in E site tRNA release. In terms of biological role, protein L1 is also a translational repressor protein, it controls the translation of the L11 operon by binding to its mRNA. The sequence is that of Large ribosomal subunit protein uL1 from Mycobacterium tuberculosis (strain ATCC 25177 / H37Ra).